The primary structure comprises 3133 residues: Hemocytin (3133 aa).

One can recognise a TIL 1 domain in the interval C40–C96. N151 carries an N-linked (GlcNAc...) asparagine glycan. The TIL 2 domain occupies T153–C209. The N-linked (GlcNAc...) asparagine glycan is linked to N237. A VWFD 1 domain is found at G247 to P418. 3 cysteine pairs are disulfide-bonded: C249-C380, C271-C417, and C295-C302. The 68-residue stretch at C509–C576 folds into the TIL 3 domain. N-linked (GlcNAc...) asparagine glycosylation occurs at N564. Residues P661 to G680 are disordered. One can recognise a TIL 4 domain in the interval C770–C837. The tract at residues S899–T924 is disordered. 2 disulfide bridges follow: C940–C1095 and C1116–C1254. 2 consecutive F5/8 type C domains span residues C940–C1095 and C1116–C1254. 5 N-linked (GlcNAc...) asparagine glycosylation sites follow: N1170, N1387, N1622, N1727, and N1847. Residues V1619–A1794 form the VWFD 2 domain. Disulfide bonds link C1621–C1754 and C1641–C1793. The TIL 5 domain maps to C1890–C1948. The 186-residue stretch at C1951–E2136 folds into the VWFD 3 domain. 2 cysteine pairs are disulfide-bonded: C1953-C2099 and C2001-C2009. N1975 and N1985 each carry an N-linked (GlcNAc...) asparagine glycan. N-linked (GlcNAc...) asparagine glycosylation is found at N2093, N2113, N2161, N2276, and N2451. Residues C2229–C2285 form the TIL 6 domain. The 70-residue stretch at V2553–E2622 folds into the VWFC 1 domain. Residues N2647, N2654, N2663, N2794, N2810, N2865, N2929, N2964, and N3028 are each glycosylated (N-linked (GlcNAc...) asparagine). The 66-residue stretch at V2842–V2907 folds into the VWFC 2 domain. 4 disulfide bridges follow: C2971–C3040, C2991–C3054, C3004–C3070, and C3020–C3072. The CTCK domain maps to C2971–G3076.

In terms of processing, may be converted into the 260 kDa mature hemocytin by proteolysis.

In terms of biological role, adhesive protein and relates to hemostasis or encapsulation of foreign substances for self-defense. The polypeptide is Hemocytin (Bombyx mori (Silk moth)).